Consider the following 284-residue polypeptide: D-tagatose-1,6-bisphosphate aldolase subunit GatY (284 aa).

The Proton donor role is filled by Asp82. Zn(2+)-binding residues include His83 and His180. Gly181 provides a ligand contact to dihydroxyacetone phosphate. His208 contacts Zn(2+). Dihydroxyacetone phosphate contacts are provided by residues 209 to 211 and 230 to 233; these read GAS and NVAT.

The protein belongs to the class II fructose-bisphosphate aldolase family. TagBP aldolase GatY subfamily. As to quaternary structure, forms a complex with GatZ. Requires Zn(2+) as cofactor.

The catalysed reaction is D-tagatofuranose 1,6-bisphosphate = D-glyceraldehyde 3-phosphate + dihydroxyacetone phosphate. It participates in carbohydrate metabolism; D-tagatose 6-phosphate degradation; D-glyceraldehyde 3-phosphate and glycerone phosphate from D-tagatose 6-phosphate: step 2/2. Catalytic subunit of the tagatose-1,6-bisphosphate aldolase GatYZ, which catalyzes the reversible aldol condensation of dihydroxyacetone phosphate (DHAP or glycerone-phosphate) with glyceraldehyde 3-phosphate (G3P) to produce tagatose 1,6-bisphosphate (TBP). Requires GatZ subunit for full activity and stability. Is involved in the catabolism of galactitol. This is D-tagatose-1,6-bisphosphate aldolase subunit GatY from Salmonella typhi.